The chain runs to 63 residues: Progonadoliberin-1 (63 aa).

Residue Gln-1 is modified to Pyrrolidone carboxylic acid. Glycine amide is present on Gly-10.

This sequence belongs to the GnRH family. Post-translationally, the precursor is cleaved by ACE, which removes the Gly-Lys-Arg peptide at the C-terminus, leading to mature hormone. The mature form of Gonadoliberin-1 is also cleaved and degraded by ACE.

The protein resides in the secreted. In terms of biological role, stimulates the secretion of gonadotropins; it stimulates the secretion of both luteinizing and follicle-stimulating hormones. This chain is Progonadoliberin-1 (GNRH1), found in Mesocricetus auratus (Golden hamster).